The chain runs to 479 residues: Protein kinase 2 (479 aa).

The tract at residues 1–136 (MGKGQSKIKN…NGNDDEDEGP (136 aa)) is disordered. 2 stretches are compositionally biased toward low complexity: residues 52-65 (AQQQ…TTAA) and 79-96 (IPAP…TPTI). A compositionally biased stretch (polar residues) spans 102 to 115 (NTDNNNINGASNEA). The 255-residue stretch at 153–407 (FELLNVIGKG…GGEVKQHPWF (255 aa)) folds into the Protein kinase domain. ATP is bound by residues 159 to 167 (IGKGSFGKV) and lysine 182. Aspartate 276 (proton acceptor) is an active-site residue. Position 309 is a phosphothreonine; by autocatalysis (threonine 309). One can recognise an AGC-kinase C-terminal domain in the interval 408-479 (KNIDWEKLDR…TYVADSILKD (72 aa)). At threonine 470 the chain carries Phosphothreonine.

The protein belongs to the protein kinase superfamily. AGC Ser/Thr protein kinase family. S6 kinase subfamily. Post-translationally, seems to be myristoylated.

It is found in the cytoplasm. The protein localises to the cell membrane. It carries out the reaction L-seryl-[protein] + ATP = O-phospho-L-seryl-[protein] + ADP + H(+). The catalysed reaction is L-threonyl-[protein] + ATP = O-phospho-L-threonyl-[protein] + ADP + H(+). Functionally, required for morphogenesis during multicellular development. Phosphorylates talB, gefN, gefS, PI4P 5-kinase and gacQ. This is Protein kinase 2 (pkgB) from Dictyostelium discoideum (Social amoeba).